We begin with the raw amino-acid sequence, 504 residues long: Maturase K (504 aa).

This sequence belongs to the intron maturase 2 family. MatK subfamily.

The protein resides in the plastid. It is found in the chloroplast. Usually encoded in the trnK tRNA gene intron. Probably assists in splicing its own and other chloroplast group II introns. This chain is Maturase K, found in Quercus rubra (Northern red oak).